A 326-amino-acid polypeptide reads, in one-letter code: HTH-type transcriptional regulator SyrM (326 aa).

Positions 32-89 constitute an HTH lysR-type domain; the sequence is IDLNLLVDLEALLQYRHITQAAQHVGRSQPAMSRALSRLRGMLKDDLLVAGSRGLVLT. The segment at residues 49–68 is a DNA-binding region (H-T-H motif); the sequence is ITQAAQHVGRSQPAMSRALS.

Belongs to the LysR transcriptional regulatory family.

Acts in trans to stimulate nod gene expression via nodD3 and exo gene expression via SyrA. This chain is HTH-type transcriptional regulator SyrM (syrM), found in Rhizobium meliloti (strain 1021) (Ensifer meliloti).